Reading from the N-terminus, the 702-residue chain is Ribosomal RNA large subunit methyltransferase K/L (702 aa).

The region spanning 43–154 (LVYQSLMWSR…KETASIALDL (112 aa)) is the THUMP domain.

Belongs to the methyltransferase superfamily. RlmKL family.

It is found in the cytoplasm. It carries out the reaction guanosine(2445) in 23S rRNA + S-adenosyl-L-methionine = N(2)-methylguanosine(2445) in 23S rRNA + S-adenosyl-L-homocysteine + H(+). It catalyses the reaction guanosine(2069) in 23S rRNA + S-adenosyl-L-methionine = N(2)-methylguanosine(2069) in 23S rRNA + S-adenosyl-L-homocysteine + H(+). In terms of biological role, specifically methylates the guanine in position 2445 (m2G2445) and the guanine in position 2069 (m7G2069) of 23S rRNA. This Escherichia coli O1:K1 / APEC protein is Ribosomal RNA large subunit methyltransferase K/L.